We begin with the raw amino-acid sequence, 529 residues long: Inosine-5'-monophosphate dehydrogenase (529 aa).

CBS domains lie at 129–185 (MVTD…SKQV) and 189–246 (MTKT…PLAT). Residues aspartate 283 and 334-336 (GVG) contribute to the NAD(+) site. K(+) contacts are provided by glycine 336 and glycine 338. Serine 339 serves as a coordination point for IMP. Cysteine 341 is a K(+) binding site. Cysteine 341 functions as the Thioimidate intermediate in the catalytic mechanism. IMP-binding positions include 374 to 376 (DGG), 397 to 398 (GS), and 421 to 425 (YRGMG). Arginine 443 acts as the Proton acceptor in catalysis. Residue glutamate 458 coordinates IMP. 3 residues coordinate K(+): glutamate 511, serine 512, and histidine 513.

Belongs to the IMPDH/GMPR family. As to quaternary structure, homotetramer. Requires K(+) as cofactor.

The enzyme catalyses IMP + NAD(+) + H2O = XMP + NADH + H(+). It participates in purine metabolism; XMP biosynthesis via de novo pathway; XMP from IMP: step 1/1. With respect to regulation, mycophenolic acid (MPA) is a non-competitive inhibitor that prevents formation of the closed enzyme conformation by binding to the same site as the amobile flap. In contrast, mizoribine monophosphate (MZP) is a competitive inhibitor that induces the closed conformation. MPA is a potent inhibitor of mammalian IMPDHs but a poor inhibitor of the bacterial enzymes. MZP is a more potent inhibitor of bacterial IMPDH. Its function is as follows. Catalyzes the conversion of inosine 5'-phosphate (IMP) to xanthosine 5'-phosphate (XMP), the first committed and rate-limiting step in the de novo synthesis of guanine nucleotides, and therefore plays an important role in the regulation of cell growth. This chain is Inosine-5'-monophosphate dehydrogenase, found in Mycobacterium leprae (strain TN).